Here is a 402-residue protein sequence, read N- to C-terminus: Tol-Pal system protein TolB (402 aa).

A signal peptide spans 1-17 (MKKIVAIFLVFLGSLWA).

This sequence belongs to the TolB family. The Tol-Pal system is composed of five core proteins: the inner membrane proteins TolA, TolQ and TolR, the periplasmic protein TolB and the outer membrane protein Pal. They form a network linking the inner and outer membranes and the peptidoglycan layer.

It localises to the periplasm. Functionally, part of the Tol-Pal system, which plays a role in outer membrane invagination during cell division and is important for maintaining outer membrane integrity. The polypeptide is Tol-Pal system protein TolB (Campylobacter jejuni (strain RM1221)).